The following is a 387-amino-acid chain: Ferrochelatase (387 aa).

Positions 196 and 277 each coordinate Fe cation.

This sequence belongs to the ferrochelatase family.

It is found in the cytoplasm. The catalysed reaction is heme b + 2 H(+) = protoporphyrin IX + Fe(2+). Its pathway is porphyrin-containing compound metabolism; protoheme biosynthesis; protoheme from protoporphyrin-IX: step 1/1. Its function is as follows. Catalyzes the ferrous insertion into protoporphyrin IX. This Synechococcus elongatus (strain ATCC 33912 / PCC 7942 / FACHB-805) (Anacystis nidulans R2) protein is Ferrochelatase.